Here is a 267-residue protein sequence, read N- to C-terminus: 5'-nucleotidase SurE (267 aa).

Positions 9, 10, 40, and 97 each coordinate a divalent metal cation.

This sequence belongs to the SurE nucleotidase family. It depends on a divalent metal cation as a cofactor.

The protein localises to the cytoplasm. It carries out the reaction a ribonucleoside 5'-phosphate + H2O = a ribonucleoside + phosphate. In terms of biological role, nucleotidase that shows phosphatase activity on nucleoside 5'-monophosphates. This is 5'-nucleotidase SurE from Helicobacter pylori (strain ATCC 700392 / 26695) (Campylobacter pylori).